Consider the following 481-residue polypeptide: Glycogen synthase (481 aa).

Residue Lys-16 coordinates ADP-alpha-D-glucose.

This sequence belongs to the glycosyltransferase 1 family. Bacterial/plant glycogen synthase subfamily.

The enzyme catalyses [(1-&gt;4)-alpha-D-glucosyl](n) + ADP-alpha-D-glucose = [(1-&gt;4)-alpha-D-glucosyl](n+1) + ADP + H(+). It functions in the pathway glycan biosynthesis; glycogen biosynthesis. Its function is as follows. Synthesizes alpha-1,4-glucan chains using ADP-glucose. In Lacticaseibacillus casei (strain BL23) (Lactobacillus casei), this protein is Glycogen synthase.